The sequence spans 121 residues: Protein AC4 (121 aa).

A disordered region spans residues 11-30 (RGQSSNPHTSESQERNIQTG). The segment covering 12–30 (GQSSNPHTSESQERNIQTG) has biased composition (polar residues).

Belongs to the geminiviridae protein AC4/C4 family.

Functionally, pathogenicity determinant. May act as a suppressor of RNA-mediated gene silencing, also known as post-transcriptional gene silencing (PTGS), a mechanism of plant viral defense that limits the accumulation of viral RNAs. This chain is Protein AC4, found in Cabbage leaf curl virus (isolate Jamaica) (CaLCuV).